The sequence spans 426 residues: L-cysteine:1D-myo-inositol 2-amino-2-deoxy-alpha-D-glucopyranoside ligase (426 aa).

Residue Cys-43 coordinates Zn(2+). Residues 43 to 46, Ser-58, and 81 to 83 contribute to the L-cysteinyl-5'-AMP site; these read CGIT and NVT. A 'HIGH' region motif is present at residues 45 to 55; sequence ITPYDATHMGH. The short motif at 200 to 205 is the 'ERGGDP' region element; it reads ERGGDP. Trp-241 lines the L-cysteinyl-5'-AMP pocket. Cys-245 contributes to the Zn(2+) binding site. L-cysteinyl-5'-AMP is bound at residue 263-265; that stretch reads GSD. His-270 contacts Zn(2+). L-cysteinyl-5'-AMP is bound at residue Val-296. The 'KMSKS' region signature appears at 302–306; sequence KMSKS.

It belongs to the class-I aminoacyl-tRNA synthetase family. MshC subfamily. Monomer. Zn(2+) serves as cofactor.

The enzyme catalyses 1D-myo-inositol 2-amino-2-deoxy-alpha-D-glucopyranoside + L-cysteine + ATP = 1D-myo-inositol 2-(L-cysteinylamino)-2-deoxy-alpha-D-glucopyranoside + AMP + diphosphate + H(+). Its function is as follows. Catalyzes the ATP-dependent condensation of GlcN-Ins and L-cysteine to form L-Cys-GlcN-Ins. The protein is L-cysteine:1D-myo-inositol 2-amino-2-deoxy-alpha-D-glucopyranoside ligase of Arthrobacter sp. (strain FB24).